Here is a 757-residue protein sequence, read N- to C-terminus: MENQSNDISKCPFHNGSMDNQAASGTKNNDWWPKQLKVNILRQNSSLSNPLSKDFDYAEAFKTLDLEAVKKDLHVLMTDSQDWWPADFGHYGGLFIRMAWHSAGTYRVHDGRGGAGAGQQRFAPLNSWPDNVSLDKARRLLWPIKQKYGQKISWADLMILTGNVALESMGFKTFGFAGGRADVWEPDESVYWGSETTWLGGDERYNNGSDGVPKDHGVVSADDDADGKVHSRNLEKPLAAVQMGLIYVNPEGPDGNPDPILAAKDIRDTFGRMAMNDEETVALIAGGHTFGKTHGAASSDHVDKEPEAAGLELQGFGWKNSFGSGKGADAITSGLEVTWTKTPTQWSNNFFENLFAFEWELSKSPAGAHQWVAKNAEAIIPDAFDSTKKHLPTMLTTDLSLRLDPEYEKISRRFLENPDQFADAFSRAWFKLTHRDMGPRARYLGPDVPQEVLLWQDPIPEVNHKLIDENDIKQLKEKILNSGLSISQLVAAAWASASTFRGSDKRGGANGARVRLAPQKDWEVNNPAKLAQVLSKLETIQTEFNASQNDGKKVSLADLIVLAGSAGVEKAAKDAGSSVTVSFNPGRMDASAEETDVESFGYLEPKADGFRNYRKTKSAVSTEELLIDKANLLTLTAPELTVLLGGLRVLDINADGSKNGVFTHRPGQLTNDFFVNLLDMNTQWQAVSNDKELYAGNDRSTGQPKWIATRADLVFGSNSELRAVAEVYASTDANEKFVNDFIKAWTKVMNLDRFDLA.

The interval 1 to 28 (MENQSNDISKCPFHNGSMDNQAASGTKN) is disordered. Polar residues predominate over residues 17–28 (SMDNQAASGTKN). A cross-link (tryptophyl-tyrosyl-methioninium (Trp-Tyr) (with M-273)) is located at residues 100–247 (WHSAGTYRVH…LAAVQMGLIY (148 aa)). Catalysis depends on H101, which acts as the Proton acceptor. Positions 247-273 (YVNPEGPDGNPDPILAAKDIRDTFGRM) form a cross-link, tryptophyl-tyrosyl-methioninium (Tyr-Met) (with W-100). H288 is a binding site for heme b.

The protein belongs to the peroxidase family. Peroxidase/catalase subfamily. As to quaternary structure, homodimer or homotetramer. Heme b is required as a cofactor. In terms of processing, formation of the three residue Trp-Tyr-Met cross-link is important for the catalase, but not the peroxidase activity of the enzyme.

The enzyme catalyses H2O2 + AH2 = A + 2 H2O. It catalyses the reaction 2 H2O2 = O2 + 2 H2O. Bifunctional enzyme with both catalase and broad-spectrum peroxidase activity. In Flavobacterium johnsoniae (strain ATCC 17061 / DSM 2064 / JCM 8514 / BCRC 14874 / CCUG 350202 / NBRC 14942 / NCIMB 11054 / UW101) (Cytophaga johnsonae), this protein is Catalase-peroxidase.